The following is a 410-amino-acid chain: Ribonucleoside-diphosphate reductase small chain (410 aa).

Residues 1 to 20 are compositionally biased toward polar residues; that stretch reads MSVQTSPSKQVTSGIQNLNM. Disordered regions lie at residues 1-43 and 55-78; these read MSVQ…DEDL and NANKKAAEAKKMAPTLKPEEANEP. Basic and acidic residues-rich tracts occupy residues 23–43 and 55–65; these read PAKKLDFGATDKENKPFDEDL and NANKKAAEAKK. Positions 146, 177, and 180 each coordinate Fe cation. Tyr-184 is a catalytic residue. Glu-240, Glu-274, and His-277 together coordinate Fe cation.

The protein belongs to the ribonucleoside diphosphate reductase small chain family. Heterodimer of a large and a small subunit. Requires Fe cation as cofactor.

It catalyses the reaction a 2'-deoxyribonucleoside 5'-diphosphate + [thioredoxin]-disulfide + H2O = a ribonucleoside 5'-diphosphate + [thioredoxin]-dithiol. In terms of biological role, provides the precursors necessary for DNA synthesis. Catalyzes the biosynthesis of deoxyribonucleotides from the corresponding ribonucleotides. This Neurospora crassa (strain ATCC 24698 / 74-OR23-1A / CBS 708.71 / DSM 1257 / FGSC 987) protein is Ribonucleoside-diphosphate reductase small chain (rnr-2).